Here is a 125-residue protein sequence, read N- to C-terminus: Small ribosomal subunit protein uS13 (125 aa).

The disordered stretch occupies residues 93–125 (RSLPVRGQRTRTNARTRKGKRKTVAGKKKAGKK).

It belongs to the universal ribosomal protein uS13 family. Part of the 30S ribosomal subunit. Forms a loose heterodimer with protein S19. Forms two bridges to the 50S subunit in the 70S ribosome.

Located at the top of the head of the 30S subunit, it contacts several helices of the 16S rRNA. In the 70S ribosome it contacts the 23S rRNA (bridge B1a) and protein L5 of the 50S subunit (bridge B1b), connecting the 2 subunits; these bridges are implicated in subunit movement. Contacts the tRNAs in the A and P-sites. This chain is Small ribosomal subunit protein uS13, found in Chlorobaculum tepidum (strain ATCC 49652 / DSM 12025 / NBRC 103806 / TLS) (Chlorobium tepidum).